The chain runs to 1611 residues: DNA (cytosine-5)-methyltransferase 1 (1611 aa).

An interaction with DMAP1 region spans residues 1-120 (MPARTAPARV…SQTSGEDCRV (120 aa)). The segment at 1-148 (MPARTAPARV…RRSKSDGETK (148 aa)) is interaction with DNMT3A. Interaction with the PRC2/EED-EZH2 complex regions lie at residues 1 to 334 (MPAR…TEKK) and 306 to 603 (KPQV…TIRQ). Position 15 is a phosphoserine (Ser15). The region spanning 16–109 (RAFSLPDDVR…SREANGCLEN (94 aa)) is the DMAP1-binding domain. An N6,N6-dimethyllysine; by EHMT2 modification is found at Lys70. The disordered stretch occupies residues 123–328 (AEKGKPPKPV…EEKRRRTTYR (206 aa)). Position 133 is a phosphoserine (Ser133). Thr137 is modified (phosphothreonine). A Phosphoserine modification is found at Ser141. Lys142 is subject to N6-methyllysine; by SETD7. Position 143 is a phosphoserine; by PKB/AKT1 (Ser143). Positions 149-216 (SEVSSSPRIT…TSRERVAGLL (68 aa)) are interaction with DNMT3B. Ser152 and Ser154 each carry phosphoserine. Lys160 carries the N6-acetyllysine modification. The interaction with PCNA stretch occupies residues 163-174 (RQTTITSHFPRG). Low complexity predominate over residues 163 to 174 (RQTTITSHFPRG). Phosphothreonine is present on Thr166. The Nuclear localization signal motif lies at 177–204 (KRKPEEEPEKVKSDDSVDEEKDQEEKRR). Composition is skewed to basic and acidic residues over residues 178-191 (RKPE…KSDD), 199-212 (QEEK…RERV), 220-265 (EPGR…RDVR), 279-311 (KDEK…QVSD), and 319-328 (EEKRRRTTYR). Lys188 bears the N6-acetyllysine mark. Lys257 is subject to N6-acetyllysine; alternate. Lys257 is covalently cross-linked (Glycyl lysine isopeptide (Lys-Gly) (interchain with G-Cter in SUMO2); alternate). Ser310 carries the post-translational modification Phosphoserine. A DNA replication foci-targeting sequence region spans residues 329–548 (ELTEKKMTRT…NLNRFTEDSL (220 aa)). Zn(2+) contacts are provided by Cys351 and Cys354. A phosphoserine mark is found at Ser392 and Ser396. 2 residues coordinate Zn(2+): Cys412 and His416. Residues Ser507 and Ser547 each carry the phosphoserine modification. The interval 594 to 614 (RAERRQTIRQPAKEKDKGPTK) is disordered. The segment at 643–689 (NAFKRRRCGVCEICQQPECGKCKACKDMVKFGGSGRSKQACQKRRCP) adopts a CXXC-type zinc-finger fold. Positions 650, 653, 656, 661, 664, 667, 683, and 688 each coordinate Zn(2+). Positions 690-751 (NMAMKEADDD…SYYKKVCIDS (62 aa)) are autoinhibitory linker. Residues 695–726 (EADDDEEVDDNIPEMPSPKKMHQGKKKKQNKN) are disordered. Residues 696–706 (ADDDEEVDDNI) show a composition bias toward acidic residues. Ser711 is modified (phosphoserine). Basic residues predominate over residues 713–725 (KKMHQGKKKKQNK). At Ser729 the chain carries Phosphoserine. Lys746 carries the post-translational modification N6-acetyllysine. The 126-residue stretch at 752-877 (ETLEVGDCVS…QDYARFESPP (126 aa)) folds into the BAH 1 domain. Residue Ser875 is modified to Phosphoserine. N6-acetyllysine occurs at positions 888, 954, 958, 972, and 1051. The BAH 2 domain maps to 969 to 1097 (HYRKYSDYIK…AKSKSFEDPP (129 aa)). The interval 1091–1126 (KSFEDPPNHARSTGNKGKGKGKGKNRTKSQTCEPSE) is disordered. 4 repeat units span residues 1106 to 1107 (KG), 1108 to 1109 (KG), 1110 to 1111 (KG), and 1112 to 1113 (KG). The tract at residues 1106–1115 (KGKGKGKGKN) is 5 X 2 AA tandem repeats of K-G. Positions 1107–1117 (GKGKGKGKNRT) are enriched in basic residues. 5 positions are modified to N6-acetyllysine: Lys1108, Lys1110, Lys1112, Lys1114, and Lys1118. The stretch at 1114-1115 (KN) is one 5; approximate repeat. An interaction with the PRC2/EED-EZH2 complex region spans residues 1118-1611 (KSQTCEPSEL…AKIKEEAAKD (494 aa)). One can recognise an SAM-dependent MTase C5-type domain in the interval 1136–1595 (LRTLDVFSGC…LEIKRCMLAK (460 aa)). A catalytic region spans residues 1136 to 1611 (LRTLDVFSGC…AKIKEEAAKD (476 aa)). Residues Ser1143, 1147–1148 (GL), 1165–1166 (EM), 1187–1188 (DC), and Cys1188 each bind S-adenosyl-L-methionine. Residue Cys1223 is part of the active site. 2 positions are modified to N6-acetyllysine: Lys1346 and Lys1412. 2 residues coordinate S-adenosyl-L-methionine: Asn1574 and Val1576. Lys1605 participates in a covalent cross-link: Glycyl lysine isopeptide (Lys-Gly) (interchain with G-Cter in SUMO2).

The protein belongs to the class I-like SAM-binding methyltransferase superfamily. C5-methyltransferase family. Homodimer. Forms a stable complex with E2F1, BB1 and HDAC1. Forms a complex with DMAP1 and HDAC2, with direct interaction. Interacts with the PRC2/EED-EZH2 complex. Probably part of a corepressor complex containing ZNF304, TRIM28, SETDB1 and DNMT1. Interacts with UHRF1; promoting its recruitment to hemimethylated DNA. Interacts with USP7, promoting its deubiquitination. Interacts with PCNA. Interacts with MBD2 and MBD3. Interacts with DNMT3A and DNMT3B. Interacts with UBC9. Interacts with CSNK1D. Interacts with HDAC1. Interacts with BAZ2A/TIP5. Interacts with SIRT7. Interacts with ZNF263; recruited to the SIX3 promoter along with other proteins involved in chromatin modification and transcriptional corepression where it contributes to transcriptional repression. Interacts with L3MBTL3 and DCAF5; the interaction requires DNMT1 methylation at Lys-142 and is necessary to target DNMT1 for ubiquitination by the CRL4-DCAF5 E3 ubiquitin ligase complex and proteasomal degradation. Interacts with PHF20L1; the interaction requires DNMT1 methylation at Lys-142 and protects DNMT1 from ubiquitination and proteasomal degradation. In terms of processing, sumoylated; sumoylation increases activity. Acetylation on multiple lysines, mainly by KAT2B/PCAF, regulates cell cycle G(2)/M transition. Deacetylation of Lys-1346 and Lys-1412 by SIRT1 increases methyltransferase activity. Post-translationally, phosphorylation of Ser-154 by CDKs is important for enzymatic activity and protein stability. Phosphorylation of Ser-143 by AKT1 prevents methylation by SETD7 thereby increasing DNMT1 stability. In terms of processing, methylation at Lys-142 by SETD7 is necessary for the regulation of DNMT1 proteasomal degradation. Ubiquitinated by UHRF1; interaction with USP7 counteracts ubiquitination by UHRF1 by promoting deubiquitination and preventing degradation by the proteasome.

The protein localises to the nucleus. The catalysed reaction is a 2'-deoxycytidine in DNA + S-adenosyl-L-methionine = a 5-methyl-2'-deoxycytidine in DNA + S-adenosyl-L-homocysteine + H(+). Its function is as follows. Methylates CpG residues. Preferentially methylates hemimethylated DNA. Associates with DNA replication sites in S phase maintaining the methylation pattern in the newly synthesized strand, that is essential for epigenetic inheritance. Associates with chromatin during G2 and M phases to maintain DNA methylation independently of replication. It is responsible for maintaining methylation patterns established in development. DNA methylation is coordinated with methylation of histones. Mediates transcriptional repression by direct binding to HDAC2. In association with DNMT3B and via the recruitment of CTCFL/BORIS, involved in activation of BAG1 gene expression by modulating dimethylation of promoter histone H3 at H3K4 and H3K9. Probably forms a corepressor complex required for activated KRAS-mediated promoter hypermethylation and transcriptional silencing of tumor suppressor genes (TSGs) or other tumor-related genes in colorectal cancer (CRC) cells. Also required to maintain a transcriptionally repressive state of genes in undifferentiated embryonic stem cells (ESCs). Associates at promoter regions of tumor suppressor genes (TSGs) leading to their gene silencing. Promotes tumor growth. This Bos taurus (Bovine) protein is DNA (cytosine-5)-methyltransferase 1 (DNMT1).